The sequence spans 474 residues: Glycogen synthase (474 aa).

Residue lysine 15 coordinates ADP-alpha-D-glucose.

It belongs to the glycosyltransferase 1 family. Bacterial/plant glycogen synthase subfamily.

The enzyme catalyses [(1-&gt;4)-alpha-D-glucosyl](n) + ADP-alpha-D-glucose = [(1-&gt;4)-alpha-D-glucosyl](n+1) + ADP + H(+). Its pathway is glycan biosynthesis; glycogen biosynthesis. In terms of biological role, synthesizes alpha-1,4-glucan chains using ADP-glucose. This is Glycogen synthase from Chlamydia muridarum (strain MoPn / Nigg).